Reading from the N-terminus, the 113-residue chain is UPF0122 protein M6_Spy0905 (113 aa).

It belongs to the UPF0122 family.

In terms of biological role, might take part in the signal recognition particle (SRP) pathway. This is inferred from the conservation of its genetic proximity to ftsY/ffh. May be a regulatory protein. In Streptococcus pyogenes serotype M6 (strain ATCC BAA-946 / MGAS10394), this protein is UPF0122 protein M6_Spy0905.